A 107-amino-acid polypeptide reads, in one-letter code: U1-lycotoxin-Ls1x (107 aa).

A signal peptide spans 1–20 (MMKVLVVVALLVTLISYSSS). Positions 21–41 (EGIDDLEADELLSLMANEHPR) are excised as a propeptide. 4 disulfides stabilise this stretch: cysteine 44–cysteine 59, cysteine 51–cysteine 68, cysteine 58–cysteine 86, and cysteine 70–cysteine 84.

The protein belongs to the neurotoxin 19 (CSTX) family. 04 (U1-Lctx) subfamily. In terms of tissue distribution, expressed by the venom gland.

It is found in the secreted. The chain is U1-lycotoxin-Ls1x from Lycosa singoriensis (Wolf spider).